The sequence spans 182 residues: Large ribosomal subunit protein bL25 (182 aa).

It belongs to the bacterial ribosomal protein bL25 family. CTC subfamily. In terms of assembly, part of the 50S ribosomal subunit; part of the 5S rRNA/L5/L18/L25 subcomplex. Contacts the 5S rRNA. Binds to the 5S rRNA independently of L5 and L18.

Its function is as follows. This is one of the proteins that binds to the 5S RNA in the ribosome where it forms part of the central protuberance. The polypeptide is Large ribosomal subunit protein bL25 (Borreliella burgdorferi (strain ZS7) (Borrelia burgdorferi)).